We begin with the raw amino-acid sequence, 703 residues long: Polyribonucleotide nucleotidyltransferase (703 aa).

Mg(2+) is bound by residues aspartate 486 and aspartate 492. One can recognise a KH domain in the interval 554 to 613 (PKIITTNIDPEKIRDVIGPGGKMINKIIAETGVKIDIEEDGRVYILTPDSAAAQKALKII). The S1 motif domain maps to 623–691 (GEVYLGKVVR…KQGRINLSRK (69 aa)).

This sequence belongs to the polyribonucleotide nucleotidyltransferase family. Mg(2+) is required as a cofactor.

The protein resides in the cytoplasm. It carries out the reaction RNA(n+1) + phosphate = RNA(n) + a ribonucleoside 5'-diphosphate. Its function is as follows. Involved in mRNA degradation. Catalyzes the phosphorolysis of single-stranded polyribonucleotides processively in the 3'- to 5'-direction. This chain is Polyribonucleotide nucleotidyltransferase, found in Ruminiclostridium cellulolyticum (strain ATCC 35319 / DSM 5812 / JCM 6584 / H10) (Clostridium cellulolyticum).